A 1470-amino-acid chain; its full sequence is RNA-directed RNA polymerase VP1 (1470 aa).

The interval 28 to 55 (AKQDQKENETTSNNKDTSSSVPKPSNFR) is disordered. The span at 37-50 (TTSNNKDTSSSVPK) shows a compositional bias: polar residues.

It carries out the reaction RNA(n) + a ribonucleoside 5'-triphosphate = RNA(n+1) + diphosphate. RNA-directed RNA polymerase that is involved in transcription and genome replication. Following infection, it catalyzes the synthesis of fully conservative plus strands. After core assembly, which consists in recruitment of one capped plus-strand for each genomic segments and polymerase complexes, the polymerase switches mode and catalyzes the synthesis of complementary minus-strands. This chain is RNA-directed RNA polymerase VP1 (S1), found in Saccharum officinarum (Sugarcane).